A 160-amino-acid chain; its full sequence is Putative oxygenase ATEG_00330 (160 aa).

Residues 24–100 (HYFGTALHAK…RNIAADPEFA (77 aa)) form the EthD domain.

Belongs to the tpcK family.

In terms of biological role, putative oxygenase; part of the gene cluster that mediates the biosynthesis of isoflavipucine. The PKS part of the PKS-NRPS ATEG_00325 probably assembles a triketide from an acetyl starter and two malonyl-CoA extender units. The poly-beta-keto intermediate would then be fused to the leucine unit by the NRPS part. The resulting amide would be liberated from the PKS-NRPS through reductive release of the linear PKS-NRPS product from the enzyme complex. Further steps in isoflapucine synthesis include a cyclization step, an oxidation step, a hydrolysis step involving a trans-amidation, and an additional oxidation step, leading to flavipucine. Formation of isoflavipucine from flavipucine requires an unusual rearrangement. Alternative rearrangement reactions could build up rubrobramide, representing a branching of flavipucine biosynthesis. The enzymes involved in the post-PKS-NRPS steps have not been identified yet, but the putative oxygenases ATEG_003329 and ATEG_00330 encoded by the cluster could play a role. This chain is Putative oxygenase ATEG_00330, found in Aspergillus terreus (strain NIH 2624 / FGSC A1156).